The sequence spans 173 residues: ATP synthase subunit b (173 aa).

The helical transmembrane segment at leucine 25–glycine 45 threads the bilayer.

The protein belongs to the ATPase B chain family. As to quaternary structure, F-type ATPases have 2 components, F(1) - the catalytic core - and F(0) - the membrane proton channel. F(1) has five subunits: alpha(3), beta(3), gamma(1), delta(1), epsilon(1). F(0) has four main subunits: a(1), b(1), b'(1) and c(10-14). The alpha and beta chains form an alternating ring which encloses part of the gamma chain. F(1) is attached to F(0) by a central stalk formed by the gamma and epsilon chains, while a peripheral stalk is formed by the delta, b and b' chains.

Its subcellular location is the cellular thylakoid membrane. Its function is as follows. F(1)F(0) ATP synthase produces ATP from ADP in the presence of a proton or sodium gradient. F-type ATPases consist of two structural domains, F(1) containing the extramembraneous catalytic core and F(0) containing the membrane proton channel, linked together by a central stalk and a peripheral stalk. During catalysis, ATP synthesis in the catalytic domain of F(1) is coupled via a rotary mechanism of the central stalk subunits to proton translocation. Component of the F(0) channel, it forms part of the peripheral stalk, linking F(1) to F(0). The chain is ATP synthase subunit b from Synechococcus sp. (strain CC9311).